We begin with the raw amino-acid sequence, 397 residues long: Riboflavin biosynthesis protein RibBA (397 aa).

The DHBP synthase stretch occupies residues 1-199 (MFHRIEEALE…IEDLIAYRRH (199 aa)). D-ribulose 5-phosphate-binding positions include 26 to 27 (RE), D31, 138 to 142 (RAGHT), and E162. E27 is a binding site for Mg(2+). H141 provides a ligand contact to Mg(2+). A GTP cyclohydrolase II region spans residues 200-397 (HETFVTKEVE…VTKLGHLLNL (198 aa)). 250–254 (RVHSE) lines the GTP pocket. Residues C255, C266, and C268 each contribute to the Zn(2+) site. GTP is bound by residues Q271, 293-295 (EGR), and T315. D327 serves as the catalytic Proton acceptor; for GTP cyclohydrolase activity. The Nucleophile; for GTP cyclohydrolase activity role is filled by R329. T350 and K355 together coordinate GTP.

It in the N-terminal section; belongs to the DHBP synthase family. The protein in the C-terminal section; belongs to the GTP cyclohydrolase II family. It depends on Mg(2+) as a cofactor. Requires Mn(2+) as cofactor. The cofactor is Zn(2+).

It carries out the reaction D-ribulose 5-phosphate = (2S)-2-hydroxy-3-oxobutyl phosphate + formate + H(+). It catalyses the reaction GTP + 4 H2O = 2,5-diamino-6-hydroxy-4-(5-phosphoribosylamino)-pyrimidine + formate + 2 phosphate + 3 H(+). The protein operates within cofactor biosynthesis; riboflavin biosynthesis; 2-hydroxy-3-oxobutyl phosphate from D-ribulose 5-phosphate: step 1/1. Its pathway is cofactor biosynthesis; riboflavin biosynthesis; 5-amino-6-(D-ribitylamino)uracil from GTP: step 1/4. Functionally, catalyzes the conversion of D-ribulose 5-phosphate to formate and 3,4-dihydroxy-2-butanone 4-phosphate. Catalyzes the conversion of GTP to 2,5-diamino-6-ribosylamino-4(3H)-pyrimidinone 5'-phosphate (DARP), formate and pyrophosphate. This chain is Riboflavin biosynthesis protein RibBA, found in Bacillus cytotoxicus (strain DSM 22905 / CIP 110041 / 391-98 / NVH 391-98).